The sequence spans 211 residues: Large ribosomal subunit protein uL4 (211 aa).

The tract at residues 40 to 80 is disordered; that stretch reads QQAHSRQGTASTLTRSEVRGGGRKPYKQKGTGRARQGSIRT. A compositionally biased stretch (polar residues) spans 41-54; it reads QAHSRQGTASTLTR. A compositionally biased stretch (basic residues) spans 60-71; the sequence is GGRKPYKQKGTG.

This sequence belongs to the universal ribosomal protein uL4 family. Part of the 50S ribosomal subunit.

Functionally, one of the primary rRNA binding proteins, this protein initially binds near the 5'-end of the 23S rRNA. It is important during the early stages of 50S assembly. It makes multiple contacts with different domains of the 23S rRNA in the assembled 50S subunit and ribosome. Forms part of the polypeptide exit tunnel. This chain is Large ribosomal subunit protein uL4, found in Prochlorococcus marinus (strain MIT 9211).